Consider the following 481-residue polypeptide: Aspartyl/glutamyl-tRNA(Asn/Gln) amidotransferase subunit B (481 aa).

This sequence belongs to the GatB/GatE family. GatB subfamily. As to quaternary structure, heterotrimer of A, B and C subunits.

The enzyme catalyses L-glutamyl-tRNA(Gln) + L-glutamine + ATP + H2O = L-glutaminyl-tRNA(Gln) + L-glutamate + ADP + phosphate + H(+). It catalyses the reaction L-aspartyl-tRNA(Asn) + L-glutamine + ATP + H2O = L-asparaginyl-tRNA(Asn) + L-glutamate + ADP + phosphate + 2 H(+). Allows the formation of correctly charged Asn-tRNA(Asn) or Gln-tRNA(Gln) through the transamidation of misacylated Asp-tRNA(Asn) or Glu-tRNA(Gln) in organisms which lack either or both of asparaginyl-tRNA or glutaminyl-tRNA synthetases. The reaction takes place in the presence of glutamine and ATP through an activated phospho-Asp-tRNA(Asn) or phospho-Glu-tRNA(Gln). The chain is Aspartyl/glutamyl-tRNA(Asn/Gln) amidotransferase subunit B from Ehrlichia ruminantium (strain Gardel).